Here is a 1165-residue protein sequence, read N- to C-terminus: Phenyloxazoline synthase MbtB (1165 aa).

The 74-residue stretch at 5-78 folds into the Carrier 1 domain; that stretch reads PARSEDIREE…AWAQLVTAGR (74 aa). An O-(pantetheine 4'-phosphoryl)serine modification is found at Ser39. Residues 77-100 form a disordered region; it reads GRQDTDSAAPPADSSGDPSGETEP. Residues 97–393 are condensation/cyclization; that stretch reads ETEPFALAPM…SSLLLDVDLV (297 aa). Residues 578–973 are adenylation; that stretch reads SYAQLRDQAL…RVPGVRTAVA (396 aa). The 77-residue stretch at 1055-1131 folds into the Carrier 2 domain; that stretch reads AASTPLEGAL…ALAAVLRAAE (77 aa). Residue Ser1090 is modified to O-(pantetheine 4'-phosphoryl)serine.

Belongs to the ATP-dependent AMP-binding enzyme family. MbtB subfamily. Pantetheine 4'-phosphate is required as a cofactor. In terms of processing, 4'-phosphopantetheine is transferred from CoA to a specific serine in each of the two carrier protein domains, leading to their activation from apo to holo forms.

It functions in the pathway siderophore biosynthesis; mycobactin biosynthesis. Functionally, involved in the initial steps of the mycobactin biosynthetic pathway. Putatively couples activated salicylic acid with serine or threonine and cyclizes this precursor to the hydroxyphenyloxazoline ring system present in this class of siderophores. The polypeptide is Phenyloxazoline synthase MbtB (mbtB) (Mycolicibacterium paratuberculosis (strain ATCC BAA-968 / K-10) (Mycobacterium paratuberculosis)).